A 253-amino-acid chain; its full sequence is Endonuclease NucS (253 aa).

Positions 63-91 (IDDPDTDFTDGSSVGNSEEQGTDGSAHTA) are disordered. The span at 71–87 (TDGSSVGNSEEQGTDGS) shows a compositional bias: polar residues.

It belongs to the NucS endonuclease family.

It localises to the cytoplasm. Its function is as follows. Cleaves both 3' and 5' ssDNA extremities of branched DNA structures. The chain is Endonuclease NucS from Corynebacterium kroppenstedtii (strain DSM 44385 / JCM 11950 / CIP 105744 / CCUG 35717).